Reading from the N-terminus, the 408-residue chain is Pleckstrin homology domain-containing family O member 1 (408 aa).

Residues 1–21 (MKKSGSGKRGPPDGNHQSAAP) form a disordered region. The PH domain maps to 20 to 131 (APEKVGWVRK…WINALSSAIT (112 aa)). Residues 132-192 (RAKNRILDEV…MLTLDLIQEE (61 aa)) are interaction with capping proteins (CPs). Residues 135–307 (NRILDEVTVE…PAQPGQLSRI (173 aa)) form an interaction with ATM, CKIP, IFP35 and NMI region. Residues 217–264 (LAGSRRRADSDRIQPSSQRASSLSRPWEKPDKGAPYTPQALKKFPSTE) form a disordered region. Position 226 is a phosphoserine (Ser226). Residues 229-240 (IQPSSQRASSLS) are compositionally biased toward polar residues. Phosphoserine is present on residues Ser270 and Ser341. Positions 307 to 408 (IQDLVARKLE…QHSQYRKSLM (102 aa)) are negative regulator of AP-1 activity. Disordered stretches follow at residues 325–348 (VQGL…SESE) and 389–408 (TPDS…KSLM). Over residues 389–401 (TPDSHLRQTSQHS) the composition is skewed to polar residues.

In terms of assembly, heterodimer or homodimer. Interacts with CK2 and actin capping subunits (capping protein CP-alpha and CP-beta). CKIP1 and CK2 together inhibit the activity of actin capping protein at the barbed ends of actin filaments. Interacts with ATM, IFP35, JUN, JUND, NMI and PI3K. Interacts with AKT1, AKT2 and AKT3 (each isozyme of PKB), PtdIns(3,5)P2, PtdIns(4,5)P2 and PtdIns(3,4,5)P2. C-terminal fragments could be released during apoptosis via caspase-3-dependent cleavage.

It localises to the cell membrane. The protein resides in the nucleus. Its subcellular location is the cytoplasm. Plays a role in the regulation of the actin cytoskeleton through its interactions with actin capping protein (CP). May function to target CK2 to the plasma membrane thereby serving as an adapter to facilitate the phosphorylation of CP by protein kinase 2 (CK2). Appears to target ATM to the plasma membrane. Appears to also inhibit tumor cell growth by inhibiting AKT-mediated cell-survival. Also implicated in PI3K-regulated muscle differentiation, the regulation of AP-1 activity (plasma membrane bound AP-1 regulator that translocates to the nucleus) and the promotion of apoptosis induced by tumor necrosis factor TNF. When bound to PKB, it inhibits it probably by decreasing PKB level of phosphorylation. The polypeptide is Pleckstrin homology domain-containing family O member 1 (Plekho1) (Mus musculus (Mouse)).